A 293-amino-acid chain; its full sequence is 33 kDa chaperonin (293 aa).

Intrachain disulfides connect C236/C238 and C269/C272.

Belongs to the HSP33 family. Post-translationally, under oxidizing conditions two disulfide bonds are formed involving the reactive cysteines. Under reducing conditions zinc is bound to the reactive cysteines and the protein is inactive.

The protein localises to the cytoplasm. Redox regulated molecular chaperone. Protects both thermally unfolding and oxidatively damaged proteins from irreversible aggregation. Plays an important role in the bacterial defense system toward oxidative stress. In Lactobacillus delbrueckii subsp. bulgaricus (strain ATCC BAA-365 / Lb-18), this protein is 33 kDa chaperonin.